The following is a 41-amino-acid chain: uncharacterized protein (41 aa).

A disordered region spans residues 1–41 (MGKKHRNRITGQKKNNHIPEKDIIAAEEAHGKEYSAAKRKP). Over residues 17 to 41 (HIPEKDIIAAEEAHGKEYSAAKRKP) the composition is skewed to basic and acidic residues.

This is an uncharacterized protein from Bacillus subtilis (strain 168).